The primary structure comprises 728 residues: tRNA (guanine(27)-N(2))-dimethyltransferase (728 aa).

Acidic residues predominate over residues 1-10 (MENMAEEELL). Disordered regions lie at residues 1 to 78 (MENM…SKRH) and 98 to 118 (DVDS…SQTC). At T23 the chain carries Phosphothreonine. A compositionally biased stretch (pro residues) spans 23 to 33 (TPAPDSAPVPA). A compositionally biased stretch (low complexity) spans 34–46 (PAADTALDSAPTP). Pro residues predominate over residues 47-61 (DSDPAPALAPAPAPA). S63 carries the phosphoserine modification. Over residues 101–118 (SASSLNSDNPGTENSQTC) the composition is skewed to polar residues. The Nucleolar localization signal signature appears at 132–136 (HKLRR). The segment at 181 to 203 (YHCIICSATITRRTDMLGHVKRH) adopts a C2H2-type zinc-finger fold. One can recognise a Trm1 methyltransferase domain in the interval 224-683 (EILKETDTDI…APLMQFKSIL (460 aa)). R257, D304, D352, and A353 together coordinate S-adenosyl-L-methionine. Residues C483, C486, C508, and C510 each coordinate Zn(2+). Residue K580 forms a Glycyl lysine isopeptide (Lys-Gly) (interchain with G-Cter in SUMO2) linkage. Phosphoserine is present on S607. The interval 693 to 728 (GAQSEGQMPPAAEDTVTDRVEMSVSDKAEASGCRRW) is disordered. Residues 708–721 (VTDRVEMSVSDKAE) show a composition bias toward basic and acidic residues.

Belongs to the class I-like SAM-binding methyltransferase superfamily. Trm1 family. Expressed in various neuronal structures during embryonic development, including spinal ganglia, trigeminal nerve and ganglion, olfactory and nasopharyngeal epithelium, nuclei of the metencephalon, thalamus and medulla oblongata. Also expressed in lung, esophagus, epiglottis, ependyma, vertebral column, spinal cord and brown adipose tissue. Expression persists in the adult brain with dynamically changing patterns in cortex and cerebellum.

The protein localises to the nucleus. It localises to the nucleolus. It carries out the reaction guanosine(27) in tRNA(Tyr) + 2 S-adenosyl-L-methionine = N(2)-dimethylguanosine(27) in tRNA(Tyr) + 2 S-adenosyl-L-homocysteine + 2 H(+). Specifically dimethylates a single guanine residue at position 27 of tRNA(Tyr) using S-adenosyl-L-methionine as donor of the methyl groups. Dimethylation at position 27 of tRNA(Tyr) is required for efficient translation of tyrosine codons. Also required to maintain 3-(3-amino-3-carboxypropyl)uridine (acp3U) in the D-loop of several cytoplasmic tRNAs. May play a role in motor coordination and exploratory behavior. This Mus musculus (Mouse) protein is tRNA (guanine(27)-N(2))-dimethyltransferase.